Reading from the N-terminus, the 276-residue chain is Diaminopimelate epimerase (276 aa).

The substrate site is built by asparagine 13, glutamine 46, and asparagine 66. Cysteine 75 serves as the catalytic Proton donor. Substrate-binding positions include 76–77 (GN), asparagine 159, asparagine 192, and 210–211 (ER). Catalysis depends on cysteine 219, which acts as the Proton acceptor. Substrate is bound at residue 220 to 221 (GT).

Belongs to the diaminopimelate epimerase family. As to quaternary structure, homodimer.

Its subcellular location is the cytoplasm. The catalysed reaction is (2S,6S)-2,6-diaminopimelate = meso-2,6-diaminopimelate. The protein operates within amino-acid biosynthesis; L-lysine biosynthesis via DAP pathway; DL-2,6-diaminopimelate from LL-2,6-diaminopimelate: step 1/1. Its function is as follows. Catalyzes the stereoinversion of LL-2,6-diaminopimelate (L,L-DAP) to meso-diaminopimelate (meso-DAP), a precursor of L-lysine and an essential component of the bacterial peptidoglycan. This chain is Diaminopimelate epimerase, found in Ectopseudomonas mendocina (strain ymp) (Pseudomonas mendocina).